The primary structure comprises 262 residues: MGQKIHPTGFRLAVSRNWASRWYASNTQFAGMLKEDIEVREFLKKKLKNASVGRVVIERPAKNARITIYSSRPGVVIGKKGEDIELLKAELQRRMGVPVHVNIEEIRKPEVDAQLIADSITQQLERRIMFRRAMKRAMQNAMRLGAQGIKIMSSGRLNGIEIARTEWYREGRVPLHTLRADIDYGFSEAETTYGIIGVKVWVYKGDHLGRNDAPVVEEPQEERRKRPGRPEGRRREGEGRPAGQRRGAGAGARRGTDAKTGE.

In terms of domain architecture, KH type-2 spans 39–107; that stretch reads VREFLKKKLK…PVHVNIEEIR (69 aa). The segment at 211–262 is disordered; that stretch reads NDAPVVEEPQEERRKRPGRPEGRRREGEGRPAGQRRGAGAGARRGTDAKTGE. Residues 221–239 are compositionally biased toward basic and acidic residues; that stretch reads EERRKRPGRPEGRRREGEG.

This sequence belongs to the universal ribosomal protein uS3 family. Part of the 30S ribosomal subunit. Forms a tight complex with proteins S10 and S14.

In terms of biological role, binds the lower part of the 30S subunit head. Binds mRNA in the 70S ribosome, positioning it for translation. The polypeptide is Small ribosomal subunit protein uS3 (Ralstonia pickettii (strain 12J)).